Consider the following 244-residue polypeptide: Phosphoadenosine 5'-phosphosulfate reductase (244 aa).

Residue Cys239 is the Nucleophile; cysteine thiosulfonate intermediate of the active site.

The protein belongs to the PAPS reductase family. CysH subfamily.

It localises to the cytoplasm. It carries out the reaction [thioredoxin]-disulfide + sulfite + adenosine 3',5'-bisphosphate + 2 H(+) = [thioredoxin]-dithiol + 3'-phosphoadenylyl sulfate. Its pathway is sulfur metabolism; hydrogen sulfide biosynthesis; sulfite from sulfate: step 3/3. Its function is as follows. Catalyzes the formation of sulfite from phosphoadenosine 5'-phosphosulfate (PAPS) using thioredoxin as an electron donor. In Shigella flexneri, this protein is Phosphoadenosine 5'-phosphosulfate reductase.